The primary structure comprises 266 residues: uncharacterized protein (266 aa).

The TIR domain occupies 112-261; that stretch reads LEKKIFISHS…KKWERIKAKF (150 aa). The active site involves Glu192.

The enzyme catalyses NAD(+) + H2O = ADP-D-ribose + nicotinamide + H(+). This is an uncharacterized protein from Bacillus subtilis (strain 168).